Consider the following 270-residue polypeptide: Tryptophan synthase alpha chain (270 aa).

Active-site proton acceptor residues include Glu51 and Asp62.

It belongs to the TrpA family. In terms of assembly, tetramer of two alpha and two beta chains.

The enzyme catalyses (1S,2R)-1-C-(indol-3-yl)glycerol 3-phosphate + L-serine = D-glyceraldehyde 3-phosphate + L-tryptophan + H2O. The protein operates within amino-acid biosynthesis; L-tryptophan biosynthesis; L-tryptophan from chorismate: step 5/5. Functionally, the alpha subunit is responsible for the aldol cleavage of indoleglycerol phosphate to indole and glyceraldehyde 3-phosphate. This is Tryptophan synthase alpha chain from Methanothermobacter thermautotrophicus (strain ATCC 29096 / DSM 1053 / JCM 10044 / NBRC 100330 / Delta H) (Methanobacterium thermoautotrophicum).